The chain runs to 918 residues: Protein translocase subunit SecA (918 aa).

ATP-binding positions include Q87, 105 to 109 (GEGKT), and D500. Residues 876-918 (AGALPVAETLERDTPESWRNTPRNAPCPCGSGKKYKHCHGQAR) form a disordered region. Positions 902, 904, 913, and 914 each coordinate Zn(2+). Residues 908–918 (KKYKHCHGQAR) show a composition bias toward basic residues.

Belongs to the SecA family. Monomer and homodimer. Part of the essential Sec protein translocation apparatus which comprises SecA, SecYEG and auxiliary proteins SecDF-YajC and YidC. It depends on Zn(2+) as a cofactor.

The protein resides in the cell inner membrane. Its subcellular location is the cytoplasm. It carries out the reaction ATP + H2O + cellular proteinSide 1 = ADP + phosphate + cellular proteinSide 2.. In terms of biological role, part of the Sec protein translocase complex. Interacts with the SecYEG preprotein conducting channel. Has a central role in coupling the hydrolysis of ATP to the transfer of proteins into and across the cell membrane, serving both as a receptor for the preprotein-SecB complex and as an ATP-driven molecular motor driving the stepwise translocation of polypeptide chains across the membrane. The polypeptide is Protein translocase subunit SecA (Rhodospirillum centenum (strain ATCC 51521 / SW)).